Here is a 433-residue protein sequence, read N- to C-terminus: Inositol hexakisphosphate kinase 1 (433 aa).

Positions 100-160 are disordered; the sequence is ETVEQDDTPE…SPKVELHSHS (61 aa). The span at 113–123 shows a compositional bias: basic residues; sequence PRRKHSRRSLH. Polar residues predominate over residues 139-149; the sequence is SFETSESSQET. The segment covering 150-160 has biased composition (basic and acidic residues); the sequence is KSPKVELHSHS. Phosphoserine is present on Ser151. Residue 220–228 coordinates substrate; it reads PCVLDLKMG. The disordered stretch occupies residues 362-383; it reads PLCGPSTSPSNTSLEAGPSSPP. Over residues 366–375 the composition is skewed to polar residues; sequence PSTSPSNTSL.

The protein belongs to the inositol phosphokinase (IPK) family.

It localises to the cytoplasm. It is found in the nucleus. It catalyses the reaction 1D-myo-inositol hexakisphosphate + ATP = 5-diphospho-1D-myo-inositol 1,2,3,4,6-pentakisphosphate + ADP. The enzyme catalyses 1-diphospho-1D-myo-inositol 2,3,4,5,6-pentakisphosphate + ATP + H(+) = 1,5-bis(diphospho)-1D-myo-inositol 2,3,4,6-tetrakisphosphate + ADP. Functionally, converts inositol hexakisphosphate (InsP6) to diphosphoinositol pentakisphosphate (InsP7/PP-InsP5). Converts 1,3,4,5,6-pentakisphosphate (InsP5) to PP-InsP4. The protein is Inositol hexakisphosphate kinase 1 (Ip6k1) of Rattus norvegicus (Rat).